A 267-amino-acid chain; its full sequence is Thymidylate synthase (267 aa).

Arginine 24 serves as a coordination point for dUMP. Histidine 54 contacts (6R)-5,10-methylene-5,6,7,8-tetrahydrofolate. 129 to 130 (RR) is a dUMP binding site. The active-site Nucleophile is the cysteine 149. DUMP-binding positions include 169–172 (RSAD), asparagine 180, and 210–212 (HVY). Aspartate 172 provides a ligand contact to (6R)-5,10-methylene-5,6,7,8-tetrahydrofolate. Alanine 266 contacts (6R)-5,10-methylene-5,6,7,8-tetrahydrofolate.

The protein belongs to the thymidylate synthase family. Bacterial-type ThyA subfamily. In terms of assembly, homodimer.

It localises to the cytoplasm. The enzyme catalyses dUMP + (6R)-5,10-methylene-5,6,7,8-tetrahydrofolate = 7,8-dihydrofolate + dTMP. It participates in pyrimidine metabolism; dTTP biosynthesis. Catalyzes the reductive methylation of 2'-deoxyuridine-5'-monophosphate (dUMP) to 2'-deoxythymidine-5'-monophosphate (dTMP) while utilizing 5,10-methylenetetrahydrofolate (mTHF) as the methyl donor and reductant in the reaction, yielding dihydrofolate (DHF) as a by-product. This enzymatic reaction provides an intracellular de novo source of dTMP, an essential precursor for DNA biosynthesis. This Paenarthrobacter aurescens (strain TC1) protein is Thymidylate synthase.